Here is a 541-residue protein sequence, read N- to C-terminus: Cytochrome P450 monooxygenase claW (541 aa).

Residues 12–32 (VINALVILFSFWAFLSLIRVI) form a helical membrane-spanning segment. Residue Cys-480 coordinates heme.

It belongs to the cytochrome P450 family. It depends on heme as a cofactor.

It localises to the membrane. It participates in secondary metabolite biosynthesis; terpenoid biosynthesis. Cytochrome P450 monooxygenase; part of the gene cluster that mediates the biosynthesis of clavilactone A, a meroterpenoid that features a unique benzo-fused ten-membered carbocyclic ring unit with an alpha,beta-epoxy-gamma-lactone moiety, forming an intriguing 10/5/3 tricyclic nested skeleton. Cytochrome P450 monooxygenases claO, claP, claQ, claU, and claW are close orthologs, suggesting that a redundant function or pseudogenes are present in the cla cluster. These monoxygenases are not involved in clavilactone A biosynthesis nor its modification. ClaR, ClaS and ClaT are sufficient to produce clavilactone A. The biosynthesis begins with the prenyltransferase claS that transfers geranyl pyrophosphate (GPP) to hydroquinone to produces geranylhydroquinone. The cytochrome P450 monooxygenase claR then catalyzes the diradical coupling reaction between the intramolecular hydroquinone and allyl moieties to form the benzo-fused ten-membered carbocyclic ring unit of wigantol. Finally the cytochrome P450 monooxygenase claT exquisitely and stereoselectively assembles the alpha,beta-epoxy-gamma-lactone moiety, producing clavilactone A via arnebinol A. This is Cytochrome P450 monooxygenase claW from Ampulloclitocybe clavipes (Club foot).